A 411-amino-acid chain; its full sequence is GTPase Obg (411 aa).

The 157-residue stretch at 1–157 (MQFIDEARFV…REIRLELRVL (157 aa)) folds into the Obg domain. Positions 20-45 (AVSFHREKYRPRGGPDGGRGGDGGSV) are disordered. Residues 33-43 (GPDGGRGGDGG) are compositionally biased toward gly residues. An OBG-type G domain is found at 158-330 (SDVGLVGLPN…LERSAEAAPR (173 aa)). GTP contacts are provided by residues 164 to 171 (GLPNAGKS), 189 to 193 (FTTLT), 212 to 215 (DIPG), 276 to 279 (NKVD), and 311 to 313 (ARL). Serine 171 and threonine 191 together coordinate Mg(2+). An OCT domain is found at 335–411 (VFRPSWRGLR…RIGDVSFEFR (77 aa)).

Belongs to the TRAFAC class OBG-HflX-like GTPase superfamily. OBG GTPase family. In terms of assembly, monomer. Mg(2+) serves as cofactor.

It localises to the cytoplasm. An essential GTPase which binds GTP, GDP and possibly (p)ppGpp with moderate affinity, with high nucleotide exchange rates and a fairly low GTP hydrolysis rate. Plays a role in control of the cell cycle, stress response, ribosome biogenesis and in those bacteria that undergo differentiation, in morphogenesis control. The polypeptide is GTPase Obg (Rubrobacter xylanophilus (strain DSM 9941 / JCM 11954 / NBRC 16129 / PRD-1)).